The following is a 163-amino-acid chain: EF-hand calcium-binding domain-containing protein 11 (163 aa).

3 EF-hand domains span residues 18–53 (SEHR…LFGY), 91–126 (RYRN…VAPK), and 127–162 (LPER…GQKE). Ca(2+) is bound by residues Asp140, Asp142, Asp144, His146, and Asp151.

The sequence is that of EF-hand calcium-binding domain-containing protein 11 (EFCAB11) from Homo sapiens (Human).